Here is a 381-residue protein sequence, read N- to C-terminus: Succinyl-diaminopimelate desuccinylase (381 aa).

His69 is a binding site for Zn(2+). Residue Asp71 is part of the active site. Asp103 lines the Zn(2+) pocket. The Proton acceptor role is filled by Glu137. Residues Glu138, Glu166, and His355 each coordinate Zn(2+).

It belongs to the peptidase M20A family. DapE subfamily. As to quaternary structure, homodimer. Zn(2+) serves as cofactor. It depends on Co(2+) as a cofactor.

It catalyses the reaction N-succinyl-(2S,6S)-2,6-diaminopimelate + H2O = (2S,6S)-2,6-diaminopimelate + succinate. It functions in the pathway amino-acid biosynthesis; L-lysine biosynthesis via DAP pathway; LL-2,6-diaminopimelate from (S)-tetrahydrodipicolinate (succinylase route): step 3/3. Functionally, catalyzes the hydrolysis of N-succinyl-L,L-diaminopimelic acid (SDAP), forming succinate and LL-2,6-diaminopimelate (DAP), an intermediate involved in the bacterial biosynthesis of lysine and meso-diaminopimelic acid, an essential component of bacterial cell walls. The chain is Succinyl-diaminopimelate desuccinylase from Rickettsia massiliae (strain Mtu5).